Here is a 216-residue protein sequence, read N- to C-terminus: ATP phosphoribosyltransferase (216 aa).

This sequence belongs to the ATP phosphoribosyltransferase family. Short subfamily. As to quaternary structure, heteromultimer composed of HisG and HisZ subunits.

It is found in the cytoplasm. It carries out the reaction 1-(5-phospho-beta-D-ribosyl)-ATP + diphosphate = 5-phospho-alpha-D-ribose 1-diphosphate + ATP. It functions in the pathway amino-acid biosynthesis; L-histidine biosynthesis; L-histidine from 5-phospho-alpha-D-ribose 1-diphosphate: step 1/9. In terms of biological role, catalyzes the condensation of ATP and 5-phosphoribose 1-diphosphate to form N'-(5'-phosphoribosyl)-ATP (PR-ATP). Has a crucial role in the pathway because the rate of histidine biosynthesis seems to be controlled primarily by regulation of HisG enzymatic activity. This chain is ATP phosphoribosyltransferase, found in Thiobacillus denitrificans (strain ATCC 25259 / T1).